A 163-amino-acid polypeptide reads, in one-letter code: Nucleotide-binding protein KPN78578_03700 (163 aa).

Belongs to the YajQ family.

Its function is as follows. Nucleotide-binding protein. The protein is Nucleotide-binding protein KPN78578_03700 of Klebsiella pneumoniae subsp. pneumoniae (strain ATCC 700721 / MGH 78578).